We begin with the raw amino-acid sequence, 209 residues long: Glutathione S-transferase 1-1 (209 aa).

A GST N-terminal domain is found at 1 to 81 (MADFYYLPGS…YLVEKYGKTD (81 aa)). Glutathione-binding positions include Ser10, 51-53 (HTI), and 65-67 (ESR). The GST C-terminal domain maps to 87–209 (CPKKRAVINQ…GCLEFKKYFE (123 aa)).

Belongs to the GST superfamily. Theta family. In terms of assembly, homodimer.

The enzyme catalyses RX + glutathione = an S-substituted glutathione + a halide anion + H(+). The catalysed reaction is 1,1,1-trichloro-2,2-bis(4-chlorophenyl)ethane = 1,1-dichloro-2,2-bis(4-chlorophenyl)ethylene + chloride + H(+). Conjugation of reduced glutathione to a wide number of exogenous and endogenous hydrophobic electrophiles. Has DDT dehydrochlorinase activity. The protein is Glutathione S-transferase 1-1 (GstD1) of Drosophila simulans (Fruit fly).